Here is a 275-residue protein sequence, read N- to C-terminus: Dermonecrotic toxin SpeSicTox-betaIIA2v (275 aa).

Histidine 5 is an active-site residue. Residues glutamate 25 and aspartate 27 each coordinate Mg(2+). Residue histidine 41 is the Nucleophile of the active site. 2 cysteine pairs are disulfide-bonded: cysteine 45–cysteine 51 and cysteine 47–cysteine 190. Aspartate 85 serves as a coordination point for Mg(2+).

This sequence belongs to the arthropod phospholipase D family. Class II subfamily. Mg(2+) serves as cofactor. In terms of tissue distribution, expressed by the venom gland.

The protein localises to the secreted. The catalysed reaction is an N-(acyl)-sphingosylphosphocholine = an N-(acyl)-sphingosyl-1,3-cyclic phosphate + choline. It carries out the reaction an N-(acyl)-sphingosylphosphoethanolamine = an N-(acyl)-sphingosyl-1,3-cyclic phosphate + ethanolamine. The enzyme catalyses a 1-acyl-sn-glycero-3-phosphocholine = a 1-acyl-sn-glycero-2,3-cyclic phosphate + choline. It catalyses the reaction a 1-acyl-sn-glycero-3-phosphoethanolamine = a 1-acyl-sn-glycero-2,3-cyclic phosphate + ethanolamine. In terms of biological role, dermonecrotic toxins cleave the phosphodiester linkage between the phosphate and headgroup of certain phospholipids (sphingolipid and lysolipid substrates), forming an alcohol (often choline) and a cyclic phosphate. This toxin acts on sphingomyelin (SM). It may also act on ceramide phosphoethanolamine (CPE), lysophosphatidylcholine (LPC) and lysophosphatidylethanolamine (LPE), but not on lysophosphatidylserine (LPS), and lysophosphatidylglycerol (LPG). It acts by transphosphatidylation, releasing exclusively cyclic phosphate products as second products. Induces dermonecrosis, hemolysis, increased vascular permeability, edema, inflammatory response, and platelet aggregation. This Sicarius peruensis (Six-eyed sand spider) protein is Dermonecrotic toxin SpeSicTox-betaIIA2v.